A 403-amino-acid polypeptide reads, in one-letter code: SH3 and cysteine-rich domain-containing protein (403 aa).

Residues M1–S51 form a disordered region. Positions A19 to S36 are enriched in polar residues. The span at Q39–S51 shows a compositional bias: basic residues. The Phorbol-ester/DAG-type zinc finger occupies L108–C160. A disordered region spans residues Q212 to G264. Low complexity predominate over residues G222–S232. SH3 domains are found at residues L286–E345 and K348–V403.

In terms of assembly, interacts (via SH3 domains) with CACNA1S. Interacts with CACNA1H. Interacts with CACNA1C. In terms of tissue distribution, expressed predominantly in brain Detected in brain neurons, more specifically in hippocampus, cerebellum and inferior olive. Highly expressed in urinary bladder, and detected at lower levels in adrenal gland. Detected at very low levels in heart, liver, lung and kidney.

It localises to the cytoplasm. It is found in the cytosol. Its subcellular location is the cell membrane. The protein resides in the sarcolemma. Functionally, promotes expression of the ion channel CACNA1H at the cell membrane, and thereby contributes to the regulation of channel activity. Plays a minor and redundant role in promoting the expression of calcium channel CACNA1S at the cell membrane, and thereby contributes to increased channel activity. Slows the rate of calcium-mediated inactivation of CACNA1C calcium channel activity. In Mus musculus (Mouse), this protein is SH3 and cysteine-rich domain-containing protein.